We begin with the raw amino-acid sequence, 306 residues long: MADTKSSNCNEHFSVEKLKEWPEPESVSLMKELAREDIDEAVHAILFRENYIVKKLDTYLQHEAVFKERRKEMLHKKWVENVAQPLQQRIIEKLFSYRRPGKSQVKYEYCLKHTNEPTKPSPLCECLFQKQQALREAKGPSYHRGRGKQPGIQKEAKETEKGLLFTRSPQFPLRSHCTVPRDRQRLHARFVQNKPCGRNKYKGAGSEKVSYALKPHLPKEEKKTVNRSQLGFERQFHASKLSQQNKGAEKKGLALGTRAQRPRSWAAADSPQGTPLVGRRVMTAEILGKHLASLQQASRAVYSNSP.

Residues 237–277 (HASKLSQQNKGAEKKGLALGTRAQRPRSWAAADSPQGTPLV) form a disordered region. A Phosphoserine modification is found at Ser270.

The protein belongs to the FAM228 family.

This chain is Protein FAM228A (Fam228a), found in Rattus norvegicus (Rat).